The following is a 297-amino-acid chain: Transcriptional regulator protein Pur-beta (297 aa).

Disordered stretches follow at residues 1–26 and 275–297; these read MADG…EQET and QERH…VDDD. The residue at position 2 (Ala-2) is an N-acetylalanine. The tract at residues 23 to 246 is DNA-binding; that stretch reads EQETQELASK…LRVSEVKPSY (224 aa). Residues 275–288 are compositionally biased toward basic and acidic residues; the sequence is QERHRDKMYERREE.

The protein belongs to the PUR DNA-binding protein family.

The protein resides in the nucleus. In terms of biological role, transcriptional regulator which can act as an activator or a repressor. The polypeptide is Transcriptional regulator protein Pur-beta (purb) (Danio rerio (Zebrafish)).